Here is a 931-residue protein sequence, read N- to C-terminus: Semaphorin-6C (931 aa).

Residues 1 to 25 (MPRAPHSMPLLLLLLLLSSLPQAQA) form the signal peptide. The Extracellular portion of the chain corresponds to 26 to 605 (AFPQDPTPLL…ASASRSIPIP (580 aa)). Residues 31–517 (PTPLLTSDLQ…FPGCIVYLSL (487 aa)) form the Sema domain. N-linked (GlcNAc...) asparagine glycosylation is present at N71. Cystine bridges form between C112/C122, C140/C149, C263/C374, and C288/C333. N287 carries N-linked (GlcNAc...) asparagine glycosylation. N438 carries N-linked (GlcNAc...) asparagine glycosylation. 4 disulfide bridges follow: C480–C511, C520–C538, C526–C571, and C530–C546. Positions 556–591 (DVDLTGNQESTEHGDCQDGATGSQSGPGDSAYGVRR) are disordered. A helical transmembrane segment spans residues 606-626 (LLLACVAAAFALGASVSGLLV). Topologically, residues 627–931 (SCACRRANRR…PAPHGGHFNF (305 aa)) are cytoplasmic. 2 disordered regions span residues 655-747 (LARL…GGPA) and 777-931 (HGPQ…HFNF). A compositionally biased stretch (low complexity) spans 693–708 (PPELACLPTPETTPEL). A compositionally biased stretch (basic and acidic residues) spans 893-906 (PEGHRGRSLKRVDV). The span at 911–923 (SPKPPLASPPQPA) shows a compositional bias: pro residues.

This sequence belongs to the semaphorin family.

It is found in the cell membrane. In terms of biological role, may be a stop signal for the dorsal root ganglion neurons in their target areas, and possibly also for other neurons. May also be involved in the maintenance and remodeling of neuronal connections. In Mus musculus (Mouse), this protein is Semaphorin-6C (Sema6c).